Reading from the N-terminus, the 202-residue chain is Zinc metalloproteinase barnettlysin-1 (202 aa).

The region spanning 6-200 (RYVELFIVVD…MKENPQCILN (195 aa)) is the Peptidase M12B domain. The Ca(2+) site is built by E9 and D93. 3 disulfide bridges follow: C117/C197, C157/C181, and C159/C164. H142 is a binding site for Zn(2+). Residue E143 is part of the active site. Zn(2+)-binding residues include H146 and H152. Ca(2+) is bound by residues C197 and N200.

Monomer. Zn(2+) serves as cofactor. Expressed by the venom gland.

The protein resides in the secreted. Functionally, non-hemorrhagic metalloproteinase that hydrolyzes the alpha chains of fibrinogen and fibrin but has no activity on beta- and gamma-chains. Cleaves X-Leu bonds. Inhibits platelet aggregation induced by the von Willebrand factor (VWF) (IC(50) is 1.4 uM) and type I collagen (IC(50) is 3.2 uM). Acts by cleaving the vWF and its receptor GPIb, and by cleaving the collagen-binding Alpha-2A domain of the collagen receptor alpha-2/beta-1 integrin (ITGA2/ITGB1). Also degrades the extracellular matrix protein fibronectin (FN1), but has no effect on laminin and type I collagen. This Bothrops barnetti (Barnett's lancehead) protein is Zinc metalloproteinase barnettlysin-1.